A 202-amino-acid polypeptide reads, in one-letter code: Small ribosomal subunit protein uS4c (202 aa).

The S4 RNA-binding domain maps to 90 to 153 (MRLDNVIFRL…KSETIISKNI (64 aa)).

Belongs to the universal ribosomal protein uS4 family. Part of the 30S ribosomal subunit. Contacts protein S5. The interaction surface between S4 and S5 is involved in control of translational fidelity.

It localises to the plastid. It is found in the chloroplast. One of the primary rRNA binding proteins, it binds directly to 16S rRNA where it nucleates assembly of the body of the 30S subunit. Functionally, with S5 and S12 plays an important role in translational accuracy. This Arbusculohypopterygium arbuscula (Moss) protein is Small ribosomal subunit protein uS4c (rps4).